Consider the following 205-residue polypeptide: Adenylyl-sulfate kinase (205 aa).

Gly31–Ser38 lines the ATP pocket. Ser105 serves as the catalytic Phosphoserine intermediate.

This sequence belongs to the APS kinase family.

The enzyme catalyses adenosine 5'-phosphosulfate + ATP = 3'-phosphoadenylyl sulfate + ADP + H(+). It participates in sulfur metabolism; hydrogen sulfide biosynthesis; sulfite from sulfate: step 2/3. Catalyzes the synthesis of activated sulfate. In Shewanella putrefaciens (strain CN-32 / ATCC BAA-453), this protein is Adenylyl-sulfate kinase.